The primary structure comprises 457 residues: ATP synthase subunit beta (457 aa).

Position 150–157 (150–157) interacts with ATP; it reads GGAGVGKT.

The protein belongs to the ATPase alpha/beta chains family. F-type ATPases have 2 components, CF(1) - the catalytic core - and CF(0) - the membrane proton channel. CF(1) has five subunits: alpha(3), beta(3), gamma(1), delta(1), epsilon(1). CF(0) has three main subunits: a(1), b(2) and c(9-12). The alpha and beta chains form an alternating ring which encloses part of the gamma chain. CF(1) is attached to CF(0) by a central stalk formed by the gamma and epsilon chains, while a peripheral stalk is formed by the delta and b chains.

Its subcellular location is the cell membrane. The enzyme catalyses ATP + H2O + 4 H(+)(in) = ADP + phosphate + 5 H(+)(out). Functionally, produces ATP from ADP in the presence of a proton gradient across the membrane. The catalytic sites are hosted primarily by the beta subunits. The sequence is that of ATP synthase subunit beta from Baumannia cicadellinicola subsp. Homalodisca coagulata.